A 137-amino-acid polypeptide reads, in one-letter code: Large ribosomal subunit protein bL12 (137 aa).

The protein belongs to the bacterial ribosomal protein bL12 family. In terms of assembly, homodimer. Part of the ribosomal stalk of the 50S ribosomal subunit. Forms a multimeric L10(L12)X complex, where L10 forms an elongated spine to which 2 to 4 L12 dimers bind in a sequential fashion. Binds GTP-bound translation factors.

Its function is as follows. Forms part of the ribosomal stalk which helps the ribosome interact with GTP-bound translation factors. Is thus essential for accurate translation. This Synechococcus sp. (strain JA-3-3Ab) (Cyanobacteria bacterium Yellowstone A-Prime) protein is Large ribosomal subunit protein bL12.